Reading from the N-terminus, the 47-residue chain is Glyceraldehyde-3-phosphate dehydrogenase, cytosolic (47 aa).

This sequence belongs to the glyceraldehyde-3-phosphate dehydrogenase family. Homotetramer.

The protein localises to the cytoplasm. The catalysed reaction is D-glyceraldehyde 3-phosphate + phosphate + NAD(+) = (2R)-3-phospho-glyceroyl phosphate + NADH + H(+). It functions in the pathway carbohydrate degradation; glycolysis; pyruvate from D-glyceraldehyde 3-phosphate: step 1/5. The sequence is that of Glyceraldehyde-3-phosphate dehydrogenase, cytosolic from Pseudotsuga menziesii (Douglas-fir).